The primary structure comprises 249 residues: Putative TrmH family tRNA/rRNA methyltransferase (249 aa).

3 residues coordinate S-adenosyl-L-methionine: glycine 196, isoleucine 216, and leucine 225.

Belongs to the class IV-like SAM-binding methyltransferase superfamily. RNA methyltransferase TrmH family.

This Staphylococcus epidermidis (strain ATCC 35984 / DSM 28319 / BCRC 17069 / CCUG 31568 / BM 3577 / RP62A) protein is Putative TrmH family tRNA/rRNA methyltransferase.